Consider the following 214-residue polypeptide: GTP cyclohydrolase 1 (214 aa).

The Zn(2+) site is built by Cys108, His111, and Cys179.

This sequence belongs to the GTP cyclohydrolase I family. Toroid-shaped homodecamer, composed of two pentamers of five dimers.

The enzyme catalyses GTP + H2O = 7,8-dihydroneopterin 3'-triphosphate + formate + H(+). The protein operates within cofactor biosynthesis; 7,8-dihydroneopterin triphosphate biosynthesis; 7,8-dihydroneopterin triphosphate from GTP: step 1/1. The polypeptide is GTP cyclohydrolase 1 (Shewanella loihica (strain ATCC BAA-1088 / PV-4)).